The chain runs to 547 residues: MLPSFTRKPADHPIGYLVALSGLLMQLMSYGIDNSYSIFSEDMHNDPSLGFPSITAISLGNSVSLGLSPAFGVLAGFCVDRLPPRFMMALSTILLFTGLWISSTLAANIYVVTFTYCLFASIGTACMLSPGAAATSSWFNRYQGLAMGINFAGGGIGSAIIPPLAGKWVVAYGWRKAFQLMSIFCAIGVLATALSARRREPKRDDSSADDETREGNKSGNGSLVRRSNEPATVGGEGAANNGHNEGKEDVREMGRKNGSHTNTSKVPPNGRGVGTNQQNGNDGEGLDVTEQSQRNNTFASAIDVDMDTSMDADEPQVIRSLHTHKLTPWELFLSMFTLPFMGNFLCWFIYSWAFYSLIYAAVPYISSMGKPGTVYAGVPPIPTDVAATLFTFYGVFQVVGSVLVGWLASLVTAEFAYVFCATVGGIGCGLLALGRSYVAFALLLCIIGFCMAGMFAVMPTLIATHLYGPNLGFYFGAVFLAGVVGGFVAPPMQATIQLRNNGSYAFVCVVMSVSMTLSALVCYATLWRSKRSGIVLAARKTKLVEIM.

At 1–11 the chain is on the cytoplasmic side; that stretch reads MLPSFTRKPAD. Residues 12 to 32 form a helical membrane-spanning segment; that stretch reads HPIGYLVALSGLLMQLMSYGI. At 33–58 the chain is on the extracellular side; sequence DNSYSIFSEDMHNDPSLGFPSITAIS. Residues 59–79 form a helical membrane-spanning segment; it reads LGNSVSLGLSPAFGVLAGFCV. The Cytoplasmic portion of the chain corresponds to 80–85; that stretch reads DRLPPR. Residues 86–106 traverse the membrane as a helical segment; that stretch reads FMMALSTILLFTGLWISSTLA. Residues 107 to 108 lie on the Extracellular side of the membrane; that stretch reads AN. Residues 109–129 traverse the membrane as a helical segment; the sequence is IYVVTFTYCLFASIGTACMLS. At 130 to 144 the chain is on the cytoplasmic side; the sequence is PGAAATSSWFNRYQG. A helical transmembrane segment spans residues 145–165; it reads LAMGINFAGGGIGSAIIPPLA. At 166-175 the chain is on the extracellular side; that stretch reads GKWVVAYGWR. A helical transmembrane segment spans residues 176-196; the sequence is KAFQLMSIFCAIGVLATALSA. Residues 197–344 are Cytoplasmic-facing; the sequence is RRREPKRDDS…MFTLPFMGNF (148 aa). The tract at residues 198-293 is disordered; sequence RREPKRDDSS…EGLDVTEQSQ (96 aa). The span at 244 to 255 shows a compositional bias: basic and acidic residues; it reads NEGKEDVREMGR. The helical transmembrane segment at 345–365 threads the bilayer; that stretch reads LCWFIYSWAFYSLIYAAVPYI. At 366–386 the chain is on the extracellular side; it reads SSMGKPGTVYAGVPPIPTDVA. The helical transmembrane segment at 387 to 407 threads the bilayer; sequence ATLFTFYGVFQVVGSVLVGWL. At 408–412 the chain is on the cytoplasmic side; it reads ASLVT. The chain crosses the membrane as a helical span at residues 413–433; that stretch reads AEFAYVFCATVGGIGCGLLAL. Topologically, residues 434–437 are extracellular; it reads GRSY. The helical transmembrane segment at 438-458 threads the bilayer; that stretch reads VAFALLLCIIGFCMAGMFAVM. Over 459 to 470 the chain is Cytoplasmic; sequence PTLIATHLYGPN. Residues 471 to 491 form a helical membrane-spanning segment; it reads LGFYFGAVFLAGVVGGFVAPP. The Extracellular portion of the chain corresponds to 492 to 505; that stretch reads MQATIQLRNNGSYA. Asn501 carries N-linked (GlcNAc...) asparagine glycosylation. A helical transmembrane segment spans residues 506–526; the sequence is FVCVVMSVSMTLSALVCYATL. At 527-547 the chain is on the cytoplasmic side; the sequence is WRSKRSGIVLAARKTKLVEIM.

The protein belongs to the major facilitator superfamily. RibJ family.

It is found in the cell membrane. Functionally, transporter involved in riboflavin (vitamin B2) uptake. Also transports FMN and FAD. The protein is Riboflavin transporter RibJ of Trypanosoma brucei brucei (strain 927/4 GUTat10.1).